The primary structure comprises 295 residues: Xyloglucan endotransglucosylase/hydrolase (295 aa).

A signal peptide spans 1–23; it reads MAVSSTPWALVALFLMASSTVMA. A GH16 domain is found at 25–222; the sequence is PPRKAIDVPF…WANAPFIASY (198 aa). The active-site Nucleophile is Glu108. Residue Glu112 is the Proton donor of the active site. Glu112 contributes to the xyloglucan binding site. A glycan (N-linked (GlcNAc...) asparagine) is linked at Asn116. Residues 125–127, 135–137, 201–202, and Gly206 each bind xyloglucan; these read QTN, NRE, and DW. 2 cysteine pairs are disulfide-bonded: Cys230–Cys239 and Cys276–Cys289. Xyloglucan is bound at residue Arg281.

Belongs to the glycosyl hydrolase 16 family. XTH group 1 subfamily. Post-translationally, contains at least one intrachain disulfide bond essential for its enzymatic activity. The N-glycan consists of an (GlcNAc)2(Hex)6 oligosaccharide; not essential for its enzymatic activity.

It localises to the secreted. Its subcellular location is the cell wall. The protein localises to the extracellular space. It is found in the apoplast. The catalysed reaction is breaks a beta-(1-&gt;4) bond in the backbone of a xyloglucan and transfers the xyloglucanyl segment on to O-4 of the non-reducing terminal glucose residue of an acceptor, which can be a xyloglucan or an oligosaccharide of xyloglucan.. In terms of biological role, catalyzes xyloglucan endohydrolysis (XEH) and/or endotransglycosylation (XET). Cleaves and religates xyloglucan polymers, an essential constituent of the primary cell wall, and thereby participates in cell wall construction of growing tissues. This chain is Xyloglucan endotransglucosylase/hydrolase (XET16A), found in Brassica oleracea var. botrytis (Cauliflower).